The primary structure comprises 272 residues: 2-succinyl-6-hydroxy-2,4-cyclohexadiene-1-carboxylate synthase (272 aa).

It belongs to the AB hydrolase superfamily. MenH family. In terms of assembly, monomer.

It catalyses the reaction 5-enolpyruvoyl-6-hydroxy-2-succinyl-cyclohex-3-ene-1-carboxylate = (1R,6R)-6-hydroxy-2-succinyl-cyclohexa-2,4-diene-1-carboxylate + pyruvate. The protein operates within quinol/quinone metabolism; 1,4-dihydroxy-2-naphthoate biosynthesis; 1,4-dihydroxy-2-naphthoate from chorismate: step 3/7. Its pathway is quinol/quinone metabolism; menaquinone biosynthesis. Catalyzes a proton abstraction reaction that results in 2,5-elimination of pyruvate from 2-succinyl-5-enolpyruvyl-6-hydroxy-3-cyclohexene-1-carboxylate (SEPHCHC) and the formation of 2-succinyl-6-hydroxy-2,4-cyclohexadiene-1-carboxylate (SHCHC). The chain is 2-succinyl-6-hydroxy-2,4-cyclohexadiene-1-carboxylate synthase from Yersinia pseudotuberculosis serotype I (strain IP32953).